The sequence spans 285 residues: MLLNKDRFGKLTSKSLDSIAALGLREANAELPCLFRNNSIESSSKTPPEPLSPLAFELSTNLKKSASALAWNVQYFVDTYGLSNVGFLTLTFRDHVTDPKEAQRRFNSLKTNILAKRYRAYIRVMEPMKSGRIHYHLLVALHSDIRTGFDFPAVYRQDYSSANKAIRSEWSFWRKTAPKYGFGRTELMPVRSNSEGIGRYVGKYISKGIESRTEQFKGVRLVEYSRKAKSLLRASSSFLTGLMSGVANFRYSFITSRTIWAVNQLLTAYAVFSALVGRITGVILL.

In terms of biological role, essential for autonomous replication of the phasyl DNA replicon. The chain is Phasyl DNA replicon protein arp (arp) from Escherichia coli.